A 562-amino-acid polypeptide reads, in one-letter code: Membrane protein insertase YidC (562 aa).

A helical membrane pass occupies residues 1–21; sequence MDIKRTILIVALAIVTYVGVL. Residues 42–74 form a disordered region; that stretch reads TAPGIPDTAAGNNGSASADVPSATGNTTSAAPL. The next 5 membrane-spanning stretches (helical) occupy residues 343–363, 369–389, 439–459, 470–490, and 517–537; these read LELT…FWLL, ILGN…GLFF, LGGC…YWVL, WILW…PIIM, and PIIF…YWVV.

Belongs to the OXA1/ALB3/YidC family. Type 1 subfamily. In terms of assembly, interacts with the Sec translocase complex via SecD. Specifically interacts with transmembrane segments of nascent integral membrane proteins during membrane integration.

Its subcellular location is the cell inner membrane. Functionally, required for the insertion and/or proper folding and/or complex formation of integral membrane proteins into the membrane. Involved in integration of membrane proteins that insert both dependently and independently of the Sec translocase complex, as well as at least some lipoproteins. Aids folding of multispanning membrane proteins. The protein is Membrane protein insertase YidC of Pseudomonas syringae pv. tomato (strain ATCC BAA-871 / DC3000).